Consider the following 182-residue polypeptide: Ribosome-recycling factor (182 aa).

The disordered stretch occupies residues 136-156 (IRKQEKNSDISKDESRDLQDK).

The protein belongs to the RRF family.

It localises to the cytoplasm. Functionally, responsible for the release of ribosomes from messenger RNA at the termination of protein biosynthesis. May increase the efficiency of translation by recycling ribosomes from one round of translation to another. This is Ribosome-recycling factor from Trichodesmium erythraeum (strain IMS101).